The chain runs to 147 residues: NAD(P)H-quinone oxidoreductase subunit N (147 aa).

It belongs to the complex I NdhN subunit family. NDH-1 can be composed of about 15 different subunits; different subcomplexes with different compositions have been identified which probably have different functions.

Its subcellular location is the cellular thylakoid membrane. It catalyses the reaction a plastoquinone + NADH + (n+1) H(+)(in) = a plastoquinol + NAD(+) + n H(+)(out). The catalysed reaction is a plastoquinone + NADPH + (n+1) H(+)(in) = a plastoquinol + NADP(+) + n H(+)(out). NDH-1 shuttles electrons from an unknown electron donor, via FMN and iron-sulfur (Fe-S) centers, to quinones in the respiratory and/or the photosynthetic chain. The immediate electron acceptor for the enzyme in this species is believed to be plastoquinone. Couples the redox reaction to proton translocation, and thus conserves the redox energy in a proton gradient. Cyanobacterial NDH-1 also plays a role in inorganic carbon-concentration. In Synechococcus sp. (strain JA-2-3B'a(2-13)) (Cyanobacteria bacterium Yellowstone B-Prime), this protein is NAD(P)H-quinone oxidoreductase subunit N.